The sequence spans 200 residues: Holliday junction branch migration complex subunit RuvA (200 aa).

The tract at residues 1 to 64 is domain I; the sequence is MIAKLKGLLD…ENDMRLLGFA (64 aa). The domain II stretch occupies residues 65–143; it reads EASERDWFRL…ALPSAPGGAA (79 aa). A flexible linker region spans residues 144 to 154; it reads MAANPAGGASA. The interval 154 to 200 is domain III; the sequence is ADAVSALENLGFKPAIAARAVATAQGELGEGASESELIRVALKRAAG.

This sequence belongs to the RuvA family. In terms of assembly, homotetramer. Forms an RuvA(8)-RuvB(12)-Holliday junction (HJ) complex. HJ DNA is sandwiched between 2 RuvA tetramers; dsDNA enters through RuvA and exits via RuvB. An RuvB hexamer assembles on each DNA strand where it exits the tetramer. Each RuvB hexamer is contacted by two RuvA subunits (via domain III) on 2 adjacent RuvB subunits; this complex drives branch migration. In the full resolvosome a probable DNA-RuvA(4)-RuvB(12)-RuvC(2) complex forms which resolves the HJ.

The protein resides in the cytoplasm. Functionally, the RuvA-RuvB-RuvC complex processes Holliday junction (HJ) DNA during genetic recombination and DNA repair, while the RuvA-RuvB complex plays an important role in the rescue of blocked DNA replication forks via replication fork reversal (RFR). RuvA specifically binds to HJ cruciform DNA, conferring on it an open structure. The RuvB hexamer acts as an ATP-dependent pump, pulling dsDNA into and through the RuvAB complex. HJ branch migration allows RuvC to scan DNA until it finds its consensus sequence, where it cleaves and resolves the cruciform DNA. The sequence is that of Holliday junction branch migration complex subunit RuvA from Erythrobacter litoralis (strain HTCC2594).